A 695-amino-acid polypeptide reads, in one-letter code: Cysteine-rich receptor-like protein kinase 6 (695 aa).

The N-terminal stretch at 1–31 (MRRHRPYLDGVAAAAATFLLAVLLHAPLAAG) is a signal peptide. The Extracellular segment spans residues 32–294 (EDEPPPWVLC…ATSGEKTKNR (263 aa)). 2 Gnk2-homologous domains span residues 38–142 (WVLC…NRDF) and 151–261 (TTYT…VFPF). Residues N49, N53, N70, and N101 are each glycosylated (N-linked (GlcNAc...) asparagine). 2 disulfide bridges follow: C96/C105 and C108/C133. An N-linked (GlcNAc...) asparagine glycan is attached at N178. Cystine bridges form between C215–C224 and C227–C252. A helical transmembrane segment spans residues 295 to 315 (IGTVLAIVMPAIAAILLMVVA). Residues 316–695 (CFCCWKRIKK…DLSITELVPR (380 aa)) are Cytoplasmic-facing. The Protein kinase domain occupies 363–634 (FADTKMIGQG…PTISSVNIML (272 aa)). Residues 369–377 (IGQGGFGMV) and K391 contribute to the ATP site. Residue D488 is the Proton acceptor of the active site. The interval 658–682 (DSSNPYSERYPRPRHSGYSDNSTVV) is disordered.

The protein belongs to the protein kinase superfamily. Ser/Thr protein kinase family. CRK subfamily.

Its subcellular location is the membrane. In terms of biological role, involved in disease resistance. Required for NPR1/NH1-mediated immunity to the bacterial blight pathogen Xanthomomas oryzae pv. oryzae (Xoo). Required for the benzothiadiazole (BTH)-induced immune response. Possesses kinase activity in vitro. The polypeptide is Cysteine-rich receptor-like protein kinase 6 (Oryza sativa subsp. japonica (Rice)).